A 398-amino-acid polypeptide reads, in one-letter code: Cap-specific mRNA (nucleoside-2'-O-)-methyltransferase 1 (398 aa).

In terms of domain architecture, RrmJ-type SAM-dependent 2'-O-MTase spans 85–298 (QFSNRAGHKL…ERYLVCVDFL (214 aa)). S-adenosyl-L-methionine contacts are provided by glycine 132 and aspartate 211. Lysine 252 serves as the catalytic Proton acceptor. The tract at residues 371 to 398 (LKAKETTTRTSAESDDSPLSSRESCKDG) is disordered.

The catalysed reaction is a 5'-end (N(7)-methyl 5'-triphosphoguanosine)-ribonucleoside in mRNA + S-adenosyl-L-methionine = a 5'-end (N(7)-methyl 5'-triphosphoguanosine)-(2'-O-methyl-ribonucleoside) in mRNA + S-adenosyl-L-homocysteine + H(+). In terms of biological role, S-adenosyl-L-methionine-dependent methyltransferase that mediates RNA cap1 2'-O-ribose methylation to the 5'-cap structure of RNAs. Methylates the ribose of the first nucleotide of a m(7)GpppG-capped mRNA to produce m(7)GpppNmp (cap1). In Leishmania braziliensis, this protein is Cap-specific mRNA (nucleoside-2'-O-)-methyltransferase 1.